The following is a 173-amino-acid chain: Ribosome maturation factor RimP (173 aa).

It belongs to the RimP family.

It localises to the cytoplasm. Required for maturation of 30S ribosomal subunits. The protein is Ribosome maturation factor RimP of Chlorobaculum tepidum (strain ATCC 49652 / DSM 12025 / NBRC 103806 / TLS) (Chlorobium tepidum).